A 613-amino-acid chain; its full sequence is MSVLKKNLAGRLLIARDAVKKALNSIPCDVAGVYKMLGANGLVLYVGKAKDLKKRLRSYYNFNQMSDRILAMVGHITELDVIVTQSEAEALLLEAQLIKTLKPKYNIIMRDDKFYPYILLSKHEYPRIVKYRGRKEAGLGKCYGPFISSLVVKLVISALRKAFQLRSCSDNFFASRDRPCIEYEMRNCSAPCTRKISEEDYAKSVHMAHKVLTGKSKELQRELFDSMRKFSDNLDYESAMVYRDRLQALKSIQECVSFQTEMSCDADFVSIYGRSGTYCLQVISFRGGISYGSQPYFVDDGNYESESDVLGMFMLQVYSDPPGRVYVDCESDYCEVINAALERLLTRKVDILTAKSHEELKFLRLARNSAMEALNRRLRDKALPAELEELAELFGLPNPPERIEVYDNSHISGTHPFGVMVVCGKDGLLRKEYRKFKIQTVLNGDDYSMMHEVLFRRFSEESPSVPDFVLIDGGRGHISSAIQVLGDLGIPFACMAKGSNRNAGEEVFYLPDGRKICLDPDSKLMLYMRKIRDEAHRFAITSHRSSRDRTLSSAVLCDIPGVGSARRRALITYFGSIDGVKRARTDEISKVPGISIKLAQRIYAYLKQGMAQP.

A GIY-YIG domain is found at 29–107 (DVAGVYKMLG…IKTLKPKYNI (79 aa)). Residues 217-252 (KELQRELFDSMRKFSDNLDYESAMVYRDRLQALKSI) form the UVR domain.

Belongs to the UvrC family. Interacts with UvrB in an incision complex.

The protein localises to the cytoplasm. Functionally, the UvrABC repair system catalyzes the recognition and processing of DNA lesions. UvrC both incises the 5' and 3' sides of the lesion. The N-terminal half is responsible for the 3' incision and the C-terminal half is responsible for the 5' incision. The chain is UvrABC system protein C from Anaplasma marginale (strain St. Maries).